A 394-amino-acid polypeptide reads, in one-letter code: Phosphoglycerate kinase (394 aa).

Substrate contacts are provided by residues 21-23 (DFN), Arg-36, 59-62 (HLGR), Arg-118, and Arg-151. Ser-183 bears the Phosphoserine mark. ATP is bound by residues Lys-201 and Gly-292. Thr-299 bears the Phosphothreonine mark. ATP-binding positions include Glu-323 and 350-353 (GGDS).

Belongs to the phosphoglycerate kinase family. In terms of assembly, monomer.

It is found in the cytoplasm. The catalysed reaction is (2R)-3-phosphoglycerate + ATP = (2R)-3-phospho-glyceroyl phosphate + ADP. It functions in the pathway carbohydrate degradation; glycolysis; pyruvate from D-glyceraldehyde 3-phosphate: step 2/5. In Bacillus anthracis (strain A0248), this protein is Phosphoglycerate kinase.